The sequence spans 65 residues: Large ribosomal subunit protein bL35 (65 aa).

Positions 1 to 15 (MPKMKTKKSAAKRFQ) are enriched in basic residues. Residues 1–26 (MPKMKTKKSAAKRFQVRGSGSIKRGQ) form a disordered region.

The protein belongs to the bacterial ribosomal protein bL35 family.

The sequence is that of Large ribosomal subunit protein bL35 from Bordetella avium (strain 197N).